The following is a 651-amino-acid chain: PTS system sucrose-specific EIIBCA component (651 aa).

Residues 3-86 (HQEVADRVLN…IVKTGLKEVT (84 aa)) enclose the PTS EIIB type-1 domain. Cysteine 25 (phosphocysteine intermediate; for EIIB activity) is an active-site residue. 10 helical membrane passes run 109 to 129 (VLSD…LLMA), 158 to 178 (MINA…GFSA), 182 to 202 (FGGN…PSLV), 204 to 224 (GYSV…VFGL), 226 to 246 (VAQA…FILA), 264 to 284 (FTPM…VGPV), 303 to 323 (TGWI…ITGL), 345 to 365 (FIFP…LAIF), 404 to 424 (FVFA…FHVL), and 444 to 464 (IPAF…PTFI). One can recognise a PTS EIIC type-1 domain in the interval 121-481 (LVAGGLLMAL…DDRDQVKSPA (361 aa)). The PTS EIIA type-1 domain maps to 510-614 (DQVFSAEIMG…DPTVMLIVTN (105 aa)). Histidine 562 functions as the Tele-phosphohistidine intermediate; for EIIA activity in the catalytic mechanism.

The protein resides in the cell membrane. It carries out the reaction N(pros)-phospho-L-histidyl-[protein](out) + sucrose = sucrose 6(G)-phosphate(in) + L-histidyl-[protein]. Its function is as follows. The phosphoenolpyruvate-dependent sugar phosphotransferase system (sugar PTS), a major carbohydrate active transport system, catalyzes the phosphorylation of incoming sugar substrates concomitantly with their translocation across the cell membrane. This system is involved in sucrose transport. This is PTS system sucrose-specific EIIBCA component (scrA) from Pediococcus pentosaceus.